Here is a 238-residue protein sequence, read N- to C-terminus: Uridylate kinase (238 aa).

Position 12-15 (12-15 (KLSG)) interacts with ATP. Position 54 (Gly-54) interacts with UMP. Residues Gly-55 and Arg-59 each coordinate ATP. UMP contacts are provided by residues Asp-74 and 135 to 142 (TGNPFFTT). ATP-binding residues include Thr-162, Tyr-168, and Asp-171.

It belongs to the UMP kinase family. In terms of assembly, homohexamer.

The protein localises to the cytoplasm. The enzyme catalyses UMP + ATP = UDP + ADP. Its pathway is pyrimidine metabolism; CTP biosynthesis via de novo pathway; UDP from UMP (UMPK route): step 1/1. Its activity is regulated as follows. Inhibited by UTP. Its function is as follows. Catalyzes the reversible phosphorylation of UMP to UDP. This is Uridylate kinase from Herminiimonas arsenicoxydans.